A 208-amino-acid polypeptide reads, in one-letter code: Holliday junction branch migration complex subunit RuvA (208 aa).

The domain I stretch occupies residues 1 to 63 (MIAFVSGPVA…EDSLTLYGFA (63 aa)). Positions 64 to 142 (NDDERQVFEL…EPVGAHIGQQ (79 aa)) are domain II. Positions 143 to 147 (GIGTP) are flexible linker. Residues 148–208 (VTSGWRDQLQ…AALQTLNRAR (61 aa)) form a domain III region.

The protein belongs to the RuvA family. As to quaternary structure, homotetramer. Forms an RuvA(8)-RuvB(12)-Holliday junction (HJ) complex. HJ DNA is sandwiched between 2 RuvA tetramers; dsDNA enters through RuvA and exits via RuvB. An RuvB hexamer assembles on each DNA strand where it exits the tetramer. Each RuvB hexamer is contacted by two RuvA subunits (via domain III) on 2 adjacent RuvB subunits; this complex drives branch migration. In the full resolvosome a probable DNA-RuvA(4)-RuvB(12)-RuvC(2) complex forms which resolves the HJ.

Its subcellular location is the cytoplasm. In terms of biological role, the RuvA-RuvB-RuvC complex processes Holliday junction (HJ) DNA during genetic recombination and DNA repair, while the RuvA-RuvB complex plays an important role in the rescue of blocked DNA replication forks via replication fork reversal (RFR). RuvA specifically binds to HJ cruciform DNA, conferring on it an open structure. The RuvB hexamer acts as an ATP-dependent pump, pulling dsDNA into and through the RuvAB complex. HJ branch migration allows RuvC to scan DNA until it finds its consensus sequence, where it cleaves and resolves the cruciform DNA. This chain is Holliday junction branch migration complex subunit RuvA, found in Streptomyces griseus subsp. griseus (strain JCM 4626 / CBS 651.72 / NBRC 13350 / KCC S-0626 / ISP 5235).